The sequence spans 398 residues: Metal tolerance protein 1 (398 aa).

Topologically, residues 1–56 (MESSSPHHSHIVEVNVGKSDEERIIVASKVCGEAPCGFSDSKNASGDAHERSASMR) are cytoplasmic. Residues 57–77 (KLCIAVVLCLVFMSVEVVGGI) form a helical membrane-spanning segment. Residues 78–89 (KANSLAILTDAA) are Vacuolar-facing. Residues 90 to 110 (HLLSDVAAFAISLFSLWAAGW) form a helical membrane-spanning segment. Topologically, residues 111 to 122 (EATPRQTYGFFR) are cytoplasmic. A helical transmembrane segment spans residues 123-143 (IEILGALVSIQLIWLLTGILV). Topologically, residues 144–159 (YEAIIRIVTETSEVNG) are vacuolar. A helical transmembrane segment spans residues 160 to 180 (FLMFLVAAFGLVVNIIMAVLL). Over 181–263 (GHDHGHSHGH…KRNINLQGAY (83 aa)) the chain is Cytoplasmic. Residues 182–232 (HDHGHSHGHGHGHGHDHHNHSHGVTVTTHHHHHDHEHGHSHGHGEDKHHAH) form a required for zinc-binding region. A disordered region spans residues 186-232 (HSHGHGHGHGHDHHNHSHGVTVTTHHHHHDHEHGHSHGHGEDKHHAH). The segment covering 187 to 202 (SHGHGHGHGHDHHNHS) has biased composition (basic residues). Residues 216–232 (HEHGHSHGHGEDKHHAH) are compositionally biased toward basic and acidic residues. Residues 264 to 284 (LHVLGDSIQSVGVMIGGAIIW) form a helical membrane-spanning segment. At 285–290 (YNPEWK) the chain is on the vacuolar side. Residues 291 to 311 (IVDLICTLAFSVIVLGTTINM) form a helical membrane-spanning segment. Over 312–398 (IRNILEVLME…ISHVTIQIER (87 aa)) the chain is Cytoplasmic.

This sequence belongs to the cation diffusion facilitator (CDF) transporter (TC 2.A.4) family. SLC30A subfamily. Ubiquitously expressed at low levels.

It localises to the vacuole membrane. Mediates zinc accumulation in roots and confers resistance to zinc. Involved in sequestration of excess zinc in the cytoplasm into vacuoles to maintain zinc homeostasis. Can also transport cadmium with a low efficiency. The chain is Metal tolerance protein 1 from Arabidopsis thaliana (Mouse-ear cress).